The primary structure comprises 664 residues: E3 ubiquitin-protein ligase CHFR (664 aa).

The FHA domain occupies 38–89; it reads WTIGRRRGCDLSFPSNKLVSGDHCKLTVDEISGEVTLEDTSTNGTVINKLQV. 2 disordered regions span residues 170–220 and 245–264; these read LEEP…GRSS and ESKD…GDGE. Polar residues predominate over residues 174–202; sequence QPSTSTSDLLPTASTSSTEPELTSAGQKH. Residues 203-215 are compositionally biased toward low complexity; sequence SSSSGPGNTSISP. Basic and acidic residues predominate over residues 245-263; the sequence is ESKDHEELEPAKKKMKGDG. An RING-type zinc finger spans residues 303–342; it reads CIICQDLLHDCVSLQPCMHTFCAACYSGWMERSSLCPTCR. Thr385 is subject to Phosphothreonine. The segment at 389-413 is disordered; sequence LQPKVRRSFSDEEGSSEDLLELSDV. Residues 399-413 show a composition bias toward acidic residues; it reads DEEGSSEDLLELSDV. The PBZ-type zinc finger occupies 633–655; it reads PDCYWGRNCRTQVKAHHAMKFNH.

The protein belongs to the CHFR family. As to quaternary structure, interacts with HDAC1 and HDAC2. Interacts with PML (with sumoylated form of PML). In terms of processing, poly-ADP-ribosylated. In addition to binding non covalently poly(ADP-ribose) via its PBZ-type zinc finger, the protein is also covalently poly-ADP-ribosylated by PARP1. Post-translationally, autoubiquitinated; may regulate its cellular level. Phosphorylated by PKB. Phosphorylation may affect its E3 ligase activity.

It localises to the nucleus. Its subcellular location is the PML body. The catalysed reaction is S-ubiquitinyl-[E2 ubiquitin-conjugating enzyme]-L-cysteine + [acceptor protein]-L-lysine = [E2 ubiquitin-conjugating enzyme]-L-cysteine + N(6)-ubiquitinyl-[acceptor protein]-L-lysine.. The protein operates within protein modification; protein ubiquitination. Functionally, E3 ubiquitin-protein ligase that functions in the antephase checkpoint by actively delaying passage into mitosis in response to microtubule poisons. Acts in early prophase before chromosome condensation, when the centrosome move apart from each other along the periphery of the nucleus. Probably involved in signaling the presence of mitotic stress caused by microtubule poisons by mediating the 'Lys-48'-linked ubiquitination of target proteins, leading to their degradation by the proteasome. Promotes the ubiquitination and subsequent degradation of AURKA and PLK1. Probably acts as a tumor suppressor, possibly by mediating the polyubiquitination of HDAC1, leading to its degradation. May also promote the formation of 'Lys-63'-linked polyubiquitin chains and functions with the specific ubiquitin-conjugating UBC13-MMS2 (UBE2N-UBE2V2) heterodimer. Substrates that are polyubiquitinated at 'Lys-63' are usually not targeted for degradation, but are rather involved in signaling cellular stress. The protein is E3 ubiquitin-protein ligase CHFR (Chfr) of Mus musculus (Mouse).